Here is a 322-residue protein sequence, read N- to C-terminus: MPASLPRLALIHTGGTIASRPSPDGRGLTPQTPPALPGLEGVQVSEHQPFNLPSPHVTPAHMQQLAHLIEQLAGGHDAVVVTHGTDTLEETAFFLHLCLPAGLPVVLTGSMRHAEEVSWDGPGNLLDAAQVALCPQTAGRGPLVVFGGDIFDARTVTKVHTSAVDAFGGYPGPIGRIDRTAAGPQVHYFARPEPRPTFRPVTLERRVEILYAYAGWQGEGYAGALERADGLVIAALGTGNLPPELLPLIAATDKPVVLATRTHAGPILPVYGYAGGGATLVEAGAIPASFLNAHKARLLLLVLLNLGASREDIRRVFTQGVF.

The region spanning 6 to 320 (PRLALIHTGG…EDIRRVFTQG (315 aa)) is the Asparaginase/glutaminase domain. The segment at 13-37 (TGGTIASRPSPDGRGLTPQTPPALP) is disordered. The active-site O-isoaspartyl threonine intermediate is T16. Substrate-binding positions include S54 and 85–86 (TD).

This sequence belongs to the asparaginase 1 family.

It is found in the cytoplasm. It catalyses the reaction L-asparagine + H2O = L-aspartate + NH4(+). In Deinococcus radiodurans (strain ATCC 13939 / DSM 20539 / JCM 16871 / CCUG 27074 / LMG 4051 / NBRC 15346 / NCIMB 9279 / VKM B-1422 / R1), this protein is Probable L-asparaginase (ansA).